The sequence spans 206 residues: Recombination protein RecR (206 aa).

Residues 58 to 73 form a C4-type zinc finger; that stretch reads CENCHNISDTKVCEIC. The Toprim domain occupies 81 to 176; that stretch reads QTICVVEDIR…IISTIARGIS (96 aa).

This sequence belongs to the RecR family.

Functionally, may play a role in DNA repair. It seems to be involved in an RecBC-independent recombinational process of DNA repair. It may act with RecF and RecO. This chain is Recombination protein RecR, found in Flavobacterium johnsoniae (strain ATCC 17061 / DSM 2064 / JCM 8514 / BCRC 14874 / CCUG 350202 / NBRC 14942 / NCIMB 11054 / UW101) (Cytophaga johnsonae).